The primary structure comprises 1438 residues: DNA polymerase III PolC-type (1438 aa).

The Exonuclease domain occupies 422 to 578 (YVVFDVETTG…YDTEATAYIF (157 aa)).

It belongs to the DNA polymerase type-C family. PolC subfamily.

The protein resides in the cytoplasm. The enzyme catalyses DNA(n) + a 2'-deoxyribonucleoside 5'-triphosphate = DNA(n+1) + diphosphate. In terms of biological role, required for replicative DNA synthesis. This DNA polymerase also exhibits 3' to 5' exonuclease activity. The protein is DNA polymerase III PolC-type of Staphylococcus aureus (strain Mu3 / ATCC 700698).